The chain runs to 1813 residues: MASSLAAQLAQIAATSTHQLDLKAQRAAHSQSLIFEKKIAGSQDFDTIFQVCHEGFQELCSLDSRFLSFRRNIFSDQSKTEDRGQMTTSQNKELDSVLEDFLSLVGARLLLTPAVKAVDWLIRRFRVHEYNTSFLLLTFLPYHTTPLFLNFLSILPEDLTQTFKVFLPYKRSMTLPPRQVIVQSASTNKSFFSALNNYVLQVSKSQAHYQGLVSFWAGITTEALANMLDSAKSGRMEIETRNKEDVLIRILPVLNDAFMLRKAPQLVVGCYMLCVVLANKASLEDHVLDNLMEAVTGSWTQTNFVSGITCLSVLSQQKHEKSLPSKVVKAVLRLDNVIEVFEELSGRYAVTGLIIGLIRSCVQENGKRSDPARIPFVGQLIQRAILSDSETIEALTILLQAFSDLQRQGLVADGMGKQLSDLLLQFNESDTLAPLLRKAIENAGVDITQLEMTLETVLQADIMPMEIEDADLLDFISSSQTQDAFAVALEPLSQAAITESSFLAPGSSLLFDQLAEAFIHGASTKDRVSRFIKLPVLRPDKPLDDPLYLSFFIRFFSGPYPVTARTVAISIVSSCITAMADKSADMQGILPYIISALADPSERVRREAAALLSLIDRLASKCKDNDDSNAQIWGRGCLYGQNERSESVQFLPMKDIYKIIHHALMPALEEYVLDPDQVGRTLTQVIRGPRSQDDSDRTRSESTGVEFKKPLRRDLFLFLCSHASKTALYTVKLRLLKFLNKVGKIGSLNCTEALRQVFDQWRLLSLEHLQRIEDGERISTNELEDQVLSIIYPKDMDAVDLLFSSLTSNSRSNRESFLTAGFNRLKEVWPSLEETHELSLANRLLQISLSLENGKLAGAAKGLLRSVDLSGPVILEFLNKISASVPDLGSRGPPSKKRRTSQNNMVPMSSMDKETDSVLQKMTFILELIDSSHSENHPELISGLFQTLTIIHHLKLQTRSEMSYLLSLNLGILLSIVNKWKGMPTRKINTSSIRADLIIDCVRTSESPQVQNTALLLVAGLATVAPELVLHSVMPIFTFMGSSVLRKDDEYSALVIDQTIDQVVPPLVQSLRNQKRDVVSGTSELLLSFTTAFEHIPSYRRLRLFEALITKLGPEDFLFAVFAMFANRYSMDKDVLATMTALASDCNAELQLITYARYLNLVKDTLQPKPTLAKTLLGVGSEDGRDPQKIAVDLLQALSHLLKFTSLRTKMSECFDSGTEQQVDKAHGLFSTILEQTLALSESVRTVKPVNSACGETLGTLLGTLSLVDFVDTIEVLLQRPSDDLRRKVIKLLENRLDSSNDRDKASQARVLSFLTVLINILETSPDILLKHAAVACIEKIGEKYGKKDPSQVLAAAKVISGEHCLGQPDRRIRVMGLLCLASMSEILGEGIIPTLPEALPRAIDLLRDTLAASDDDSQLHDAVYSLISALLIHVPWMISGEYLDNILQLSFISSNTDLAEGSDENRLEALQLLAKRVDVKEAFAGVERNWDSAVTQGSRAVQEALDVVRTAIEKHAKSATVKNVSVLMKLLCKAFDLRRLQLSPLNDGGFDEAEVDEIESRANDVAVRMIYKLNDTVFRPLFIDLTAWAVSGLGKKDTTGRVARLTTFYRFLESFFGTLKSIVTGYSSYIIESAVEVLKFSRCNDKATKTLWLAVLRMLRNSFGHDQDEFWQSPTHLASISEPLIKQLSMATNSPTLDLVAAEAIPTIVELAVAADSPDNHKELNTVIMKFMRAGHGNARGADNPYTRLAAVKCEQQLTERLGEEWLALLPEMLPYISELLEDDDENVEREVRRWVLSIEDILGEKLDDMLT.

HEAT repeat units follow at residues D245–L283, S389–N427, E428–P464, A584–K621, and I659–S695. Disordered regions lie at residues I686 to V705 and D887 to D912. Positions R690–V705 are enriched in basic and acidic residues. HEAT repeat units lie at residues Q1058–H1095, K1189–G1228, L1265–D1302, A1309–K1347, E1398–W1437, L1678–A1715, and A1769–E1806.

It belongs to the HEATR1/UTP10 family. In terms of assembly, component of the ribosomal small subunit (SSU) processome.

The protein localises to the nucleus. The protein resides in the nucleolus. Functionally, involved in nucleolar processing of pre-18S ribosomal RNA. Involved in ribosome biosynthesis. The chain is U3 small nucleolar RNA-associated protein 10 from Coccidioides immitis (strain RS) (Valley fever fungus).